Reading from the N-terminus, the 335-residue chain is GTPase Obg (335 aa).

In terms of domain architecture, Obg spans 1–158 (MFVDQITLEL…RLVELELKLI (158 aa)). One can recognise an OBG-type G domain in the interval 159–334 (ADIGLVGFPN…LYDLFKSKLS (176 aa)). GTP-binding positions include 165 to 172 (GFPNAGKS), 190 to 194 (FTTLH), 215 to 218 (DIPG), 285 to 288 (NKID), and 315 to 317 (SGL). Mg(2+) is bound by residues serine 172 and threonine 192.

It belongs to the TRAFAC class OBG-HflX-like GTPase superfamily. OBG GTPase family. Monomer. The cofactor is Mg(2+).

The protein resides in the cytoplasm. An essential GTPase which binds GTP, GDP and possibly (p)ppGpp with moderate affinity, with high nucleotide exchange rates and a fairly low GTP hydrolysis rate. Plays a role in control of the cell cycle, stress response, ribosome biogenesis and in those bacteria that undergo differentiation, in morphogenesis control. The polypeptide is GTPase Obg (Chlamydia trachomatis serovar L2 (strain ATCC VR-902B / DSM 19102 / 434/Bu)).